Here is a 171-residue protein sequence, read N- to C-terminus: Myosin regulatory light chain 12B (171 aa).

Residue Thr-18 is modified to Phosphothreonine; by MLCK and ZIPK/DAPK3. Phosphoserine; by MLCK and ZIPK/DAPK3 is present on Ser-19. EF-hand domains are found at residues 28–63 (SQIQEFKEAFNMIDQNRDGFIDKEDLHDMLASLGKN), 97–132 (DPEDVIRNAFACFDEEATGTIQEDYLRELLTTMGDR), and 133–168 (FTDEEVDELYREAPIDKKGNFNYIEFTRILKHGAKD). 4 residues coordinate Ca(2+): Asp-41, Asn-43, Asp-45, and Asp-52.

As to quaternary structure, myosin is a hexamer of 2 heavy chains and 4 light chains: interacts with myosin heavy chain MYO19. Phosphorylation increases the actin-activated myosin ATPase activity and thereby regulates the contractile activity. It is required to generate the driving force in the migration of the cells but not necessary for localization of myosin-2 at the leading edge. Phosphorylation is reduced following epigallocatechin-3-O-gallate treatment.

Its function is as follows. Myosin regulatory subunit that plays an important role in regulation of both smooth muscle and nonmuscle cell contractile activity via its phosphorylation. Phosphorylation triggers actin polymerization in vascular smooth muscle. Implicated in cytokinesis, receptor capping, and cell locomotion. This Bos taurus (Bovine) protein is Myosin regulatory light chain 12B (MYL12B).